A 407-amino-acid polypeptide reads, in one-letter code: uncharacterized protein (407 aa).

Residues 1 to 250 (MLDPLDILTN…LERDVLKQRL (250 aa)) enclose the EAL domain.

This is an uncharacterized protein from Bacillus subtilis (strain 168).